The chain runs to 496 residues: Costunolide synthase (496 aa).

The helical; Signal-anchor for type II membrane protein transmembrane segment at 4-24 threads the bilayer; sequence FTIFSLVVASLVFFACWALVA. Asparagine 26, asparagine 168, asparagine 280, and asparagine 412 each carry an N-linked (GlcNAc...) asparagine glycan. Position 434 (cysteine 434) interacts with heme.

Belongs to the cytochrome P450 family. Requires heme as cofactor. Expressed in floral glandular trichomes.

Its subcellular location is the membrane. It carries out the reaction germacra-1(10),4,11(13)-trien-12-oate + reduced [NADPH--hemoprotein reductase] + O2 = (+)-costunolide + oxidized [NADPH--hemoprotein reductase] + 2 H2O. It participates in secondary metabolite biosynthesis; terpenoid biosynthesis. Its function is as follows. Involved in the biosynthesis of germacrene-derived sesquiterpene lactones. Component of the parthenolide biosynthetic pathway; parthenolide and conjugates are promising anti-cancer drugs highly active against colon cancer cells. Hydroxylates germacrene A acid to 6-alpha-hydroxy-germacrene A acid, a precursor of sesquiterpene lactones that spontaneously undergoes a lactonization which yields costunolide. In Tanacetum parthenium (Feverfew), this protein is Costunolide synthase.